A 213-amino-acid chain; its full sequence is Cell division protein SepF 2 (213 aa).

The tract at residues 16–63 (EDDGYDGRGFDPDDDFEPELDPEPERDRRRHEPPHQSHQALHPQRDES) is disordered. The span at 27 to 39 (PDDDFEPELDPEP) shows a compositional bias: acidic residues.

Belongs to the SepF family. As to quaternary structure, homodimer. Interacts with FtsZ.

It is found in the cytoplasm. Its function is as follows. Cell division protein that is part of the divisome complex and is recruited early to the Z-ring. Probably stimulates Z-ring formation, perhaps through the cross-linking of FtsZ protofilaments. Its function overlaps with FtsA. This Streptomyces avermitilis (strain ATCC 31267 / DSM 46492 / JCM 5070 / NBRC 14893 / NCIMB 12804 / NRRL 8165 / MA-4680) protein is Cell division protein SepF 2.